A 385-amino-acid polypeptide reads, in one-letter code: MKFPNLLSLGVAASTTVLAAVPNQKPIGDTIEDVHLGKFLIELGPGDTRWVTEEEKWGLRRDGRRFFDITAEAEQNVFPRTFAQTTVTFPTELQNLAHVKKLASSLSKNRLQTFLTKFTSFYTRYYKSESGRQSAIWLFEQIEKTIQESSATEARVEKFEHPWGQFSIIATIPGQTNKTVVVGAHQDSINLLMPSILAAPGADDDGSGTATILEALRVLLKSEAVAQGKAPNTVEFHWYSAEEAGLLGSQAVFAQYKQDNRDVKSMLQQDMTGYSKGTMNAGHADSVGIITDFVDEGLTNFIKKVVTGYCGISYVLTKCGYACSDHASASRYGYPSAFVIESKFEYSSKLIHTTRDEVSSLDFDHMLQHAKMTLGLVYELAFADL.

A signal peptide spans 1-19; the sequence is MKFPNLLSLGVAASTTVLA. Residues 20-87 constitute a propeptide that is removed on maturation; it reads AVPNQKPIGD…FPRTFAQTTV (68 aa). A glycan (N-linked (GlcNAc...) asparagine) is linked at N177. The Zn(2+) site is built by H185, D204, E243, and D270. An intrachain disulfide couples C319 to C323. Residue H352 coordinates Zn(2+).

It belongs to the peptidase M28 family. M28E subfamily. Monomer. The cofactor is Zn(2+).

It is found in the secreted. Functionally, extracellular aminopeptidase that allows assimilation of proteinaceous substrates. This chain is Leucine aminopeptidase 1 (LAP1), found in Ajellomyces capsulatus (strain H88) (Darling's disease fungus).